Reading from the N-terminus, the 898-residue chain is Probable LRR receptor-like serine/threonine-protein kinase At4g20450 (898 aa).

The signal sequence occupies residues 1–24 (MEGIHKLIFLALIWIFLITNIVDA). Over 25–535 (QDQQGFISLD…TGPGNNKKKL (511 aa)) the chain is Extracellular. N-linked (GlcNAc...) asparagine glycans are attached at residues Asn-40, Asn-52, Asn-98, Asn-247, Asn-253, Asn-420, Asn-443, Asn-465, Asn-484, and Asn-489. LRR repeat units lie at residues 455–477 (QLQK…LAKM), 479–501 (LLTF…LLNM), and 505–526 (GLIT…ESET). The helical transmembrane segment at 536–556 (LVPILASAASVGIIIAVLLLV) threads the bilayer. Residues 557-898 (NILLLRKKKP…FGPEHIPDAR (342 aa)) are Cytoplasmic-facing. At Thr-582 the chain carries Phosphothreonine. Positions 591–864 (NNFERPLGEG…QVANELQECL (274 aa)) constitute a Protein kinase domain. Residues 597–605 (LGEGGFGVV) and Lys-619 contribute to the ATP site. Tyr-664 is subject to Phosphotyrosine. The Proton acceptor role is filled by Asp-716. Ser-750 is subject to Phosphoserine. A Phosphothreonine modification is found at Thr-751. Position 764 is a phosphotyrosine (Tyr-764). The tract at residues 864–898 (LLTENSRKGGRHDVDSKSSLEQSTSFGPEHIPDAR) is disordered. Residues 868 to 881 (NSRKGGRHDVDSKS) are compositionally biased toward basic and acidic residues.

The protein belongs to the protein kinase superfamily. Ser/Thr protein kinase family.

The protein localises to the membrane. The enzyme catalyses L-seryl-[protein] + ATP = O-phospho-L-seryl-[protein] + ADP + H(+). It carries out the reaction L-threonyl-[protein] + ATP = O-phospho-L-threonyl-[protein] + ADP + H(+). This chain is Probable LRR receptor-like serine/threonine-protein kinase At4g20450, found in Arabidopsis thaliana (Mouse-ear cress).